A 233-amino-acid polypeptide reads, in one-letter code: Lactate utilization protein C (233 aa).

Belongs to the LutC/YkgG family.

Functionally, is involved in L-lactate degradation and allows cells to grow with lactate as the sole carbon source. In Oceanobacillus iheyensis (strain DSM 14371 / CIP 107618 / JCM 11309 / KCTC 3954 / HTE831), this protein is Lactate utilization protein C.